Reading from the N-terminus, the 518-residue chain is Zinc finger protein 449 (518 aa).

The region spanning 30 to 112 (RQRFRQFQYR…SLIEDLQREL (83 aa)) is the SCAN box domain. Residues 292-304 (NPTLGETPENSNL) are compositionally biased toward polar residues. Residues 292-325 (NPTLGETPENSNLEEPLNPKPHKKKSPGEKPHRC) form a disordered region. 7 consecutive C2H2-type zinc fingers follow at residues 323–345 (HRCPQCGKCFARKSQLTGHQRIH), 351–373 (HKCPECGKRFLRSSDLYRHQRLH), 379–401 (YECTVCKKRFTRRSHLIGHQRTH), 407–429 (YKCLECGKSFCHGSSLKRHLKTH), 435–457 (HRCHNCGKSFSRLTALTLHQRTH), 463–485 (FKCNYCGKSFRQRPSLVIHLRIH), and 491–513 (YKCTHCSKSFRQRAGLIMHQVTH).

It belongs to the krueppel C2H2-type zinc-finger protein family.

The protein resides in the nucleus. In terms of biological role, may be involved in transcriptional regulation. The sequence is that of Zinc finger protein 449 (ZNF449) from Homo sapiens (Human).